A 171-amino-acid chain; its full sequence is Phosphopantetheine adenylyltransferase (171 aa).

T9 contacts substrate. ATP-binding positions include 9–10 (TF) and H17. Residues K41, L73, and R87 each contribute to the substrate site. Residues 88-90 (GLR), E98, and 123-129 (YQFISGT) each bind ATP.

The protein belongs to the bacterial CoaD family. As to quaternary structure, homohexamer. The cofactor is Mg(2+).

The protein localises to the cytoplasm. It carries out the reaction (R)-4'-phosphopantetheine + ATP + H(+) = 3'-dephospho-CoA + diphosphate. The protein operates within cofactor biosynthesis; coenzyme A biosynthesis; CoA from (R)-pantothenate: step 4/5. Functionally, reversibly transfers an adenylyl group from ATP to 4'-phosphopantetheine, yielding dephospho-CoA (dPCoA) and pyrophosphate. This Paraburkholderia phytofirmans (strain DSM 17436 / LMG 22146 / PsJN) (Burkholderia phytofirmans) protein is Phosphopantetheine adenylyltransferase.